We begin with the raw amino-acid sequence, 217 residues long: Probable GTP-binding protein EngB (217 aa).

The region spanning 29-213 is the EngB-type G domain; that stretch reads GPLEVAFAGR…RQAIGETVGV (185 aa). GTP contacts are provided by residues 37-44, 64-68, 91-94, 158-161, and 192-194; these read GRSNVGKS, GRTQE, DMPG, TKTD, and TSS. Positions 44 and 66 each coordinate Mg(2+).

The protein belongs to the TRAFAC class TrmE-Era-EngA-EngB-Septin-like GTPase superfamily. EngB GTPase family. Mg(2+) is required as a cofactor.

In terms of biological role, necessary for normal cell division and for the maintenance of normal septation. This chain is Probable GTP-binding protein EngB, found in Rhizobium leguminosarum bv. trifolii (strain WSM2304).